We begin with the raw amino-acid sequence, 271 residues long: Mannosyl-3-phosphoglycerate phosphatase (271 aa).

The active-site Nucleophile is the aspartate 13. Residues aspartate 13, aspartate 15, and aspartate 214 each contribute to the Mg(2+) site.

This sequence belongs to the HAD-like hydrolase superfamily. MPGP family. It depends on Mg(2+) as a cofactor.

The protein localises to the cytoplasm. The catalysed reaction is 2-O-(alpha-D-mannosyl)-3-phosphoglycerate + H2O = (2R)-2-O-(alpha-D-mannosyl)-glycerate + phosphate. The chain is Mannosyl-3-phosphoglycerate phosphatase (yedP) from Escherichia coli O6:H1 (strain CFT073 / ATCC 700928 / UPEC).